Reading from the N-terminus, the 65-residue chain is ATP synthase F(0) complex subunit 8 (65 aa).

Residues 8 to 24 form a helical membrane-spanning segment; it reads TWLTTILSMFLALFIIF. Residue K53 is modified to N6-acetyllysine; alternate. N6-succinyllysine; alternate is present on K53. Position 56 is an N6-acetyllysine (K56).

It belongs to the ATPase protein 8 family. As to quaternary structure, component of the ATP synthase complex composed at least of ATP5F1A/subunit alpha, ATP5F1B/subunit beta, ATP5MC1/subunit c (homooctomer), MT-ATP6/subunit a, MT-ATP8/subunit 8, ATP5ME/subunit e, ATP5MF/subunit f, ATP5MG/subunit g, ATP5MK/subunit k, ATP5MJ/subunit j, ATP5F1C/subunit gamma, ATP5F1D/subunit delta, ATP5F1E/subunit epsilon, ATP5PF/subunit F6, ATP5PB/subunit b, ATP5PD/subunit d, ATP5PO/subunit OSCP. ATP synthase complex consists of a soluble F(1) head domain (subunits alpha(3) and beta(3)) - the catalytic core - and a membrane F(0) domain - the membrane proton channel (subunits c, a, 8, e, f, g, k and j). These two domains are linked by a central stalk (subunits gamma, delta, and epsilon) rotating inside the F1 region and a stationary peripheral stalk (subunits F6, b, d, and OSCP). Interacts with PRICKLE3.

The protein resides in the mitochondrion membrane. Its function is as follows. Subunit 8, of the mitochondrial membrane ATP synthase complex (F(1)F(0) ATP synthase or Complex V) that produces ATP from ADP in the presence of a proton gradient across the membrane which is generated by electron transport complexes of the respiratory chain. ATP synthase complex consist of a soluble F(1) head domain - the catalytic core - and a membrane F(1) domain - the membrane proton channel. These two domains are linked by a central stalk rotating inside the F(1) region and a stationary peripheral stalk. During catalysis, ATP synthesis in the catalytic domain of F(1) is coupled via a rotary mechanism of the central stalk subunits to proton translocation. In vivo, can only synthesize ATP although its ATP hydrolase activity can be activated artificially in vitro. Part of the complex F(0) domain. In Capra ibex ibex (Alpine ibex), this protein is ATP synthase F(0) complex subunit 8.